A 550-amino-acid polypeptide reads, in one-letter code: Natural resistance-associated macrophage protein 1 (550 aa).

The interval 1 to 45 (MTGDKGPQRLSGSSYGSISSPTSPTSPGPQQAPPRETYLSEKIPI) is disordered. The Cytoplasmic portion of the chain corresponds to 1 to 58 (MTGDKGPQRLSGSSYGSISSPTSPTSPGPQQAPPRETYLSEKIPIPDTKPGTFSLRKL). Residues 11 to 23 (SGSSYGSISSPTS) are compositionally biased toward low complexity. The helical transmembrane segment at 59-76 (WAFTGPGFLMSIAFLDPG) threads the bilayer. At 77-85 (NIESDLQAG) the chain is on the extracellular side. A helical membrane pass occupies residues 86 to 105 (AVAGFKLLWVLLWATVLGLL). The Cytoplasmic portion of the chain corresponds to 106–142 (CQRLAARLGVVTGKDLGEVCHLYYPKVPRTVLWLTIE). A helical membrane pass occupies residues 143 to 163 (LAIVGSDMQEVIGTAIAFNLL). Residues 164–167 (SAGR) lie on the Extracellular side of the membrane. Residues 168 to 187 (IPLWGGVLITIVDTFFFLFL) form a helical membrane-spanning segment. Over 188 to 196 (DNYGLRKLE) the chain is Cytoplasmic. The helical transmembrane segment at 197 to 217 (AFFGLLITIMALTFGYEYVVA) threads the bilayer. At 218–240 (RPEQGALLRGLFLPSCPGCGHPE) the chain is on the extracellular side. The chain crosses the membrane as a helical span at residues 241–259 (LLQAVGIVGAIIMPHNIYL). The Cytoplasmic segment spans residues 260 to 287 (HSALVKSREIDRARRADIREANMYFLIE). A helical membrane pass occupies residues 288-307 (ATIALSVSFIINLFVMAVFG). Residues 308–349 (QAFYQKTNQAAFNICANSSLHDYAKIFPMNNATVAVDIYQGG) are Extracellular-facing. Residues Asn324 and Asn338 are each glycosylated (N-linked (GlcNAc...) asparagine). Residues 350–369 (VILGCLFGPAALYIWAIGLL) traverse the membrane as a helical segment. The Cytoplasmic portion of the chain corresponds to 370-400 (AAGQSSTMTGTYAGQFVMEGFLRLRWSRFAR). The helical transmembrane segment at 401-418 (VLLTRSCAILPTVLVAVF) threads the bilayer. The Extracellular portion of the chain corresponds to 419-429 (RDLRDLSGLND). The chain crosses the membrane as a helical span at residues 430–450 (LLNVLQSLLLPFAVLPILTFT). Residues 451-466 (SMPTLMQEFANGLLNK) lie on the Cytoplasmic side of the membrane. Residues 467-488 (VVTSSIMVLVCAINLYFVVSYL) traverse the membrane as a helical segment. Over 489–496 (PSLPHPAY) the chain is Extracellular. A helical transmembrane segment spans residues 497–516 (FGLAALLAAAYLGLSTYLVW). Residues 517-550 (TCCLAHGATFLAHSSHHHFLYGLLEEDQKGETSG) lie on the Cytoplasmic side of the membrane.

Belongs to the NRAMP family. As to expression, macrophages; peripheral blood leukocytes, lung, spleen and liver.

It localises to the late endosome membrane. Its subcellular location is the lysosome membrane. It catalyses the reaction Zn(2+)(in) + H(+)(out) = Zn(2+)(out) + H(+)(in). It carries out the reaction Fe(2+)(in) + H(+)(out) = Fe(2+)(out) + H(+)(in). The enzyme catalyses Mn(2+)(in) + H(+)(out) = Mn(2+)(out) + H(+)(in). Macrophage-specific antiporter that fluxes metal ions in either direction against a proton gradient. Localized to late endosomal lysosomal membranes, delivers bivalent cations from the cytosol into these acidic compartments where they may directly affect antimicrobial activity. Involved in iron metabolism and host natural resistance to infection with intracellular parasites. Pathogen resistance involves sequestration of Fe(2+) and Mn(2+), cofactors of both prokaryotic and eukaryotic catalases and superoxide dismutases, not only to protect the macrophage against its own generation of reactive oxygen species, but to deny the cations to the pathogen for synthesis of its protective enzymes. The sequence is that of Natural resistance-associated macrophage protein 1 from Homo sapiens (Human).